The following is a 299-amino-acid chain: Probable lipid kinase YegS-like (299 aa).

One can recognise a DAGKc domain in the interval 2-133 (ATYPESLLIL…VDIAQVNDKT (132 aa)). ATP-binding positions include Thr-40, 66 to 72 (GDGTINE), and Thr-95. 3 residues coordinate Mg(2+): Leu-215, Asp-218, and Leu-220. The Proton acceptor role is filled by Glu-271.

The protein belongs to the diacylglycerol/lipid kinase family. YegS lipid kinase subfamily. Mg(2+) is required as a cofactor. Ca(2+) serves as cofactor.

It localises to the cytoplasm. Functionally, probably phosphorylates lipids; the in vivo substrate is unknown. The chain is Probable lipid kinase YegS-like from Enterobacter sp. (strain 638).